The primary structure comprises 403 residues: Sulfate adenylyltransferase (403 aa).

It belongs to the sulfate adenylyltransferase family.

The enzyme catalyses sulfate + ATP + H(+) = adenosine 5'-phosphosulfate + diphosphate. Its pathway is sulfur metabolism; hydrogen sulfide biosynthesis; sulfite from sulfate: step 1/3. The chain is Sulfate adenylyltransferase from Pelodictyon phaeoclathratiforme (strain DSM 5477 / BU-1).